Reading from the N-terminus, the 258-residue chain is Large ribosomal subunit protein eL8z (258 aa).

The interval 1–20 (MAPKRGGRAPVPAKKKTEKV) is disordered.

It belongs to the eukaryotic ribosomal protein eL8 family.

The chain is Large ribosomal subunit protein eL8z (RPL7A-1) from Oryza sativa subsp. japonica (Rice).